The primary structure comprises 151 residues: Transcriptional regulator MraZ (151 aa).

2 consecutive SpoVT-AbrB domains span residues 5–52 and 81–124; these read ANAI…PLDE and AVDL…DEDA.

It belongs to the MraZ family. In terms of assembly, forms oligomers.

The protein resides in the cytoplasm. Its subcellular location is the nucleoid. The polypeptide is Transcriptional regulator MraZ (Pseudomonas fluorescens (strain SBW25)).